Consider the following 690-residue polypeptide: Methionine--tRNA ligase 1 (690 aa).

The 'HIGH' region motif lies at 11–21; the sequence is PYANGHIHIGH. Zn(2+) contacts are provided by Cys-142, Cys-145, Cys-155, and Cys-158. The short motif at 328 to 332 is the 'KMSKS' region element; that stretch reads KMSKS. Residue Lys-331 participates in ATP binding. The tRNA-binding domain occupies 590 to 690; that stretch reads DFSKVDLRVA…SGAKPGMRVH (101 aa).

Belongs to the class-I aminoacyl-tRNA synthetase family. MetG type 1 subfamily. As to quaternary structure, homodimer. Zn(2+) serves as cofactor.

It localises to the cytoplasm. It catalyses the reaction tRNA(Met) + L-methionine + ATP = L-methionyl-tRNA(Met) + AMP + diphosphate. Is required not only for elongation of protein synthesis but also for the initiation of all mRNA translation through initiator tRNA(fMet) aminoacylation. The protein is Methionine--tRNA ligase 1 of Sorangium cellulosum (strain So ce56) (Polyangium cellulosum (strain So ce56)).